A 108-amino-acid chain; its full sequence is Glutaredoxin-1 (108 aa).

The Glutaredoxin domain occupies 3 to 106 (EEFVQQRLTN…DILSSIGVLR (104 aa)). A disulfide bond links C23 and C26.

This sequence belongs to the glutaredoxin family.

Its subcellular location is the virion. In terms of biological role, displays thioltransferase and dehydroascorbate reductase activities. This Variola virus (isolate Human/India/Ind3/1967) (VARV) protein is Glutaredoxin-1 (OPG075).